The chain runs to 263 residues: uncharacterized protein (263 aa).

This is an uncharacterized protein from Bacillus subtilis (strain 168).